The sequence spans 403 residues: L-cysteine:1D-myo-inositol 2-amino-2-deoxy-alpha-D-glucopyranoside ligase (403 aa).

C43 serves as a coordination point for Zn(2+). L-cysteinyl-5'-AMP contacts are provided by residues 43–46, T58, 81–83, and W223; these read CGIT and NVT. The short motif at 45–55 is the 'HIGH' region element; that stretch reads ITPYDATHLGH. Residue C227 participates in Zn(2+) binding. 245 to 247 lines the L-cysteinyl-5'-AMP pocket; it reads GAD. H252 is a binding site for Zn(2+). An L-cysteinyl-5'-AMP-binding site is contributed by V278. The short motif at 284–288 is the 'KMSKS' region element; it reads KMSKS.

This sequence belongs to the class-I aminoacyl-tRNA synthetase family. MshC subfamily. As to quaternary structure, monomer. Zn(2+) serves as cofactor.

It catalyses the reaction 1D-myo-inositol 2-amino-2-deoxy-alpha-D-glucopyranoside + L-cysteine + ATP = 1D-myo-inositol 2-(L-cysteinylamino)-2-deoxy-alpha-D-glucopyranoside + AMP + diphosphate + H(+). Catalyzes the ATP-dependent condensation of GlcN-Ins and L-cysteine to form L-Cys-GlcN-Ins. This is L-cysteine:1D-myo-inositol 2-amino-2-deoxy-alpha-D-glucopyranoside ligase from Acidothermus cellulolyticus (strain ATCC 43068 / DSM 8971 / 11B).